Here is a 576-residue protein sequence, read N- to C-terminus: Putative ankyrin repeat protein L86 (576 aa).

ANK repeat units follow at residues 68 to 101 (HGWTALMIASVTSSYWCTIDTVKLLLENGADPNI), 118 to 147 (TRINCLEINQRTNFLKTAQLLIEYGANVNF), 159 to 188 (SGGFILNSSLQYNNFDIIKILLDNNTNPNI), 192 to 223 (KGNTLLHNICIYNQSCDDIIKLLLNYNVDLNS), 227 to 260 (KRKTVLMYLCKFYNKTNNVNSIKLLLKNGANPNI), 264 to 300 (KGNTAMMYLFNKFYHEYGDNKYNIIKLLLQYGANPNI), 304 to 337 (SGISVLLRASTIQNGWERKNIIKFLLKHGADPNI), 341 to 373 (QGLTFLMLLVKNPQNHMTKEFLNFVLKYVDPNI), 377 to 408 (KGKNILHYIPSESIDSPDILKRLLEFTTNPNA), 412 to 446 (KGRTPLMLACKKFTSTNDIVKINLLVEYSVISLTD), and 448 to 480 (NGKKALDYAMNNTSNIRLFMVSILLEKGDTFDV).

The sequence is that of Putative ankyrin repeat protein L86 from Acanthamoeba polyphaga mimivirus (APMV).